Reading from the N-terminus, the 905-residue chain is DNA gyrase subunit A (905 aa).

The Topo IIA-type catalytic domain maps to 35–524 (IPDVRDGLKP…GEFDQDIEDL (490 aa)). Catalysis depends on Tyr123, which acts as the O-(5'-phospho-DNA)-tyrosine intermediate. The GyrA-box signature appears at 551-557 (QKRGGKG).

This sequence belongs to the type II topoisomerase GyrA/ParC subunit family. Heterotetramer, composed of two GyrA and two GyrB chains. In the heterotetramer, GyrA contains the active site tyrosine that forms a transient covalent intermediate with DNA, while GyrB binds cofactors and catalyzes ATP hydrolysis.

It is found in the cytoplasm. It carries out the reaction ATP-dependent breakage, passage and rejoining of double-stranded DNA.. A type II topoisomerase that negatively supercoils closed circular double-stranded (ds) DNA in an ATP-dependent manner to modulate DNA topology and maintain chromosomes in an underwound state. Negative supercoiling favors strand separation, and DNA replication, transcription, recombination and repair, all of which involve strand separation. Also able to catalyze the interconversion of other topological isomers of dsDNA rings, including catenanes and knotted rings. Type II topoisomerases break and join 2 DNA strands simultaneously in an ATP-dependent manner. This is DNA gyrase subunit A from Rickettsia typhi (strain ATCC VR-144 / Wilmington).